The chain runs to 106 residues: Iron-sulfur cluster assembly protein CyaY (106 aa).

This sequence belongs to the frataxin family.

In terms of biological role, involved in iron-sulfur (Fe-S) cluster assembly. May act as a regulator of Fe-S biogenesis. This chain is Iron-sulfur cluster assembly protein CyaY, found in Citrobacter koseri (strain ATCC BAA-895 / CDC 4225-83 / SGSC4696).